The chain runs to 243 residues: Variant surface antigen E (243 aa).

The N-terminal stretch at 1 to 29 is a signal peptide; it reads MKKSIFSKKLLVSFGSLVTLAAIPLIAIS. The N-palmitoyl cysteine moiety is linked to residue cysteine 30. Cysteine 30 carries S-diacylglycerol cysteine lipidation. The segment at 34–243 is disordered; sequence TDNLSQSQQP…TTSDGQNQNK (210 aa). Low complexity predominate over residues 52–92; that stretch reads GTNTENGSNNGSGSGTTNSSGGTNQSGSASGNGSSNSSVST. Residues 93–243 are compositionally biased toward polar residues; sequence PDGQHSNPSN…TTSDGQNQNK (151 aa). A run of 11 repeats spans residues 97-109, 110-122, 123-135, 136-148, 149-161, 162-174, 175-187, 188-200, 201-213, 214-226, and 227-239. An 11 X 13 AA tandem repeats region spans residues 97–239; the sequence is HSNPSNPTTS…PSNPTTSDGQ (143 aa).

It localises to the cell membrane. In terms of biological role, responsible for the antigenic diversity for host adaptation. Expression in E.coli of a construct containing vlpD, vlpE, and vlpF yields antigenically distinguishable products corresponding to each gene. In Mesomycoplasma hyorhinis (Mycoplasma hyorhinis), this protein is Variant surface antigen E (vlpE).